The following is a 238-amino-acid chain: tRNA (guanine-N(7)-)-methyltransferase (238 aa).

Residues Glu68, Glu93, Asp120, and Asp143 each contribute to the S-adenosyl-L-methionine site. Residue Asp143 is part of the active site. Residues Lys147, Asp179, and Thr216–Glu219 contribute to the substrate site.

The protein belongs to the class I-like SAM-binding methyltransferase superfamily. TrmB family.

It carries out the reaction guanosine(46) in tRNA + S-adenosyl-L-methionine = N(7)-methylguanosine(46) in tRNA + S-adenosyl-L-homocysteine. It participates in tRNA modification; N(7)-methylguanine-tRNA biosynthesis. Its function is as follows. Catalyzes the formation of N(7)-methylguanine at position 46 (m7G46) in tRNA. In Shewanella baltica (strain OS223), this protein is tRNA (guanine-N(7)-)-methyltransferase.